A 498-amino-acid polypeptide reads, in one-letter code: ATP synthase subunit beta, chloroplastic (498 aa).

172-179 (GGAGVGKT) provides a ligand contact to ATP.

Belongs to the ATPase alpha/beta chains family. F-type ATPases have 2 components, CF(1) - the catalytic core - and CF(0) - the membrane proton channel. CF(1) has five subunits: alpha(3), beta(3), gamma(1), delta(1), epsilon(1). CF(0) has four main subunits: a(1), b(1), b'(1) and c(9-12).

The protein localises to the plastid. It is found in the chloroplast thylakoid membrane. The enzyme catalyses ATP + H2O + 4 H(+)(in) = ADP + phosphate + 5 H(+)(out). Functionally, produces ATP from ADP in the presence of a proton gradient across the membrane. The catalytic sites are hosted primarily by the beta subunits. The chain is ATP synthase subunit beta, chloroplastic from Eucalyptus globulus subsp. globulus (Tasmanian blue gum).